A 611-amino-acid polypeptide reads, in one-letter code: Rho GTPase-activating protein gacN (611 aa).

Residues 24–219 form the Rho-GAP domain; the sequence is KTFKKILKPG…VLIEEFHVLY (196 aa). Positions 236 to 499 form a coiled coil; sequence IREDKRSTSE…TKLQKSSSSS (264 aa). Residues 476-491 are compositionally biased toward basic and acidic residues; that stretch reads NQLEKEKSKLQDELTK. The disordered stretch occupies residues 476–550; the sequence is NQLEKEKSKL…TTPPPPLDED (75 aa). Low complexity-rich tracts occupy residues 495 to 509 and 527 to 540; these read SSSS…SSSS and TTTT…AQQP.

The protein localises to the cytoplasm. Rho GTPase-activating protein involved in the signal transduction pathway. This chain is Rho GTPase-activating protein gacN (gacN), found in Dictyostelium discoideum (Social amoeba).